An 879-amino-acid chain; its full sequence is Leucine--tRNA ligase (879 aa).

The 'HIGH' region signature appears at 46-56; sequence PYPSGALHMGH. Residues 638–642 carry the 'KMSKS' region motif; sequence KMSKS. Lys641 serves as a coordination point for ATP.

This sequence belongs to the class-I aminoacyl-tRNA synthetase family.

The protein resides in the cytoplasm. The enzyme catalyses tRNA(Leu) + L-leucine + ATP = L-leucyl-tRNA(Leu) + AMP + diphosphate. The chain is Leucine--tRNA ligase from Xanthomonas campestris pv. campestris (strain 8004).